The chain runs to 314 residues: Glycerol-1-phosphate dehydrogenase [NAD(P)+] (314 aa).

NAD(+)-binding positions include 52–56 (GKPLD) and 74–77 (TSAS). Residue aspartate 79 participates in substrate binding. Serine 83 is a binding site for NAD(+). Aspartate 131 provides a ligand contact to substrate. Residues aspartate 131 and histidine 211 each contribute to the Zn(2+) site. Histidine 215 lines the substrate pocket. Residue histidine 231 participates in Zn(2+) binding.

Belongs to the glycerol-1-phosphate dehydrogenase family. It depends on Zn(2+) as a cofactor.

The protein resides in the cytoplasm. It catalyses the reaction sn-glycerol 1-phosphate + NAD(+) = dihydroxyacetone phosphate + NADH + H(+). The catalysed reaction is sn-glycerol 1-phosphate + NADP(+) = dihydroxyacetone phosphate + NADPH + H(+). It participates in membrane lipid metabolism; glycerophospholipid metabolism. Functionally, catalyzes the NAD(P)H-dependent reduction of dihydroxyacetonephosphate (DHAP or glycerone phosphate) to glycerol 1-phosphate (G1P). The G1P thus generated is used as the glycerophosphate backbone of phospholipids in the cellular membranes of Archaea. In Korarchaeum cryptofilum (strain OPF8), this protein is Glycerol-1-phosphate dehydrogenase [NAD(P)+].